The sequence spans 692 residues: Methionine--tRNA ligase (692 aa).

The 'HIGH' region motif lies at 12–22 (PYANGSFHIGH). Zn(2+)-binding residues include cysteine 143, cysteine 146, cysteine 156, and cysteine 159. The 'KMSKS' region signature appears at 341–345 (KMSKS). ATP is bound at residue lysine 344. The 107-residue stretch at 586–692 (DFAKIDLRIA…PGAQPGMRVR (107 aa)) folds into the tRNA-binding domain.

Belongs to the class-I aminoacyl-tRNA synthetase family. MetG type 1 subfamily. In terms of assembly, homodimer. Requires Zn(2+) as cofactor.

Its subcellular location is the cytoplasm. The catalysed reaction is tRNA(Met) + L-methionine + ATP = L-methionyl-tRNA(Met) + AMP + diphosphate. Functionally, is required not only for elongation of protein synthesis but also for the initiation of all mRNA translation through initiator tRNA(fMet) aminoacylation. In Bordetella bronchiseptica (strain ATCC BAA-588 / NCTC 13252 / RB50) (Alcaligenes bronchisepticus), this protein is Methionine--tRNA ligase.